Consider the following 427-residue polypeptide: Protein king tubby 1 (427 aa).

The segment at 48–174 is disordered; the sequence is SPSNPDQIIS…ASGHNDAEGD (127 aa). The segment covering 57–86 has biased composition (low complexity); it reads SSSGSPTTVTATGTGTTTTTGSVTTTPTSP.

It belongs to the TUB family.

It localises to the cytoplasm. The protein localises to the nucleus. The chain is Protein king tubby 1 (king-tubby1) from Culex quinquefasciatus (Southern house mosquito).